We begin with the raw amino-acid sequence, 583 residues long: Lamin-B3 (583 aa).

A disordered region spans residues 1–30 (MATSTPSRAREHASAAQSPGSPTRISRMQE). A head region spans residues 2 to 32 (ATSTPSRAREHASAAQSPGSPTRISRMQEKE). Residues 15-26 (AAQSPGSPTRIS) are compositionally biased toward polar residues. Position 21 is a phosphoserine (S21). Positions 30 to 386 (EKEDLRHLND…KMLEGEEQRL (357 aa)) constitute an IF rod domain. Positions 33–67 (DLRHLNDRLAAYIERVRSLEADKSLLKIQLEEREE) are coil 1A. Residues 68 to 79 (VSSREVTNLRQL) are linker 1. Residues 80 to 215 (YETELADARK…QKNIHTQEVK (136 aa)) are coil 1B. A linker 2 region spans residues 216-242 (EIKKRHDTRIVEIDSGRRVEFESKLAE). The tract at residues 243-384 (ALQELRRDHE…YRKMLEGEEQ (142 aa)) is coil 2. Residues 383 to 431 (EQRLKLSPSPSQRSTVSRASTSQTSRLLRGKKRKLDETGRSVTKRSYKV) are disordered. Residues 385-580 (RLKLSPSPSQ…QSHQSVDPSC (196 aa)) are tail. Positions 390–408 (PSPSQRSTVSRASTSQTSR) are enriched in polar residues. Residue S391 is modified to Phosphoserine. Residues 429 to 546 (YKVVQQASST…EECAERTLYR (118 aa)) form the LTD domain. C580 is subject to Cysteine methyl ester. C580 is lipidated: S-farnesyl cysteine. Residues 581 to 583 (SIM) constitute a propeptide, removed in mature form.

This sequence belongs to the intermediate filament family. Post-translationally, phosphorylation plays a key role in lamin organization, subcellular localization and nuclear envelope disintegration. Phosphorylation by CDK1 at Ser-21 at the onset of mitosis drives lamin disassembly and nuclear envelope breakdown.

It is found in the nucleus lamina. The protein resides in the nucleus envelope. The protein localises to the nucleus. Its subcellular location is the nucleoplasm. It localises to the nucleus matrix. Its function is as follows. Lamins are intermediate filament proteins that assemble into a filamentous meshwork, and which constitute the major components of the nuclear lamina, a fibrous layer on the nucleoplasmic side of the inner nuclear membrane. Lamins provide a framework for the nuclear envelope, bridging the nuclear envelope and chromatin, thereby playing an important role in nuclear assembly, chromatin organization, nuclear membrane and telomere dynamics. The structural integrity of the lamina is strictly controlled by the cell cycle, as seen by the disintegration and formation of the nuclear envelope in prophase and telophase, respectively. The polypeptide is Lamin-B3 (lmnb3.L) (Xenopus laevis (African clawed frog)).